A 54-amino-acid chain; its full sequence is UPF0391 membrane protein Rfer_1875 (54 aa).

The next 2 helical transmembrane spans lie at 5-25 (AVVFFVIALIAALFGFGGIAA) and 30-50 (IGKILFIVFAILAVASFLFGL).

Belongs to the UPF0391 family.

It is found in the cell membrane. The polypeptide is UPF0391 membrane protein Rfer_1875 (Albidiferax ferrireducens (strain ATCC BAA-621 / DSM 15236 / T118) (Rhodoferax ferrireducens)).